We begin with the raw amino-acid sequence, 528 residues long: MAHPPRLNDDKPVIWTVSVTRLFELFRDISLEFDHLANITPIQLGFEKAVTYIRKKLANERCDAIIAAGSNGAYLKSRLSVPVILIKPSGYDVLQALAKAGKLTSSIGVVTYQETIPALVAFQKTFNLRLDQRSYITEEDARGQINELKANGTEAVVGAGLITDLAEEAGMTGIFIYSAATVRQAFSDALDMTRMSLRHNTHDATRNALRTRYVLGDMLGQSPQMEQVRQTILLYARSSAAVLIEGETGTGKELAAQAIHREYFARHDARQGKKSHPFVAVNCGAIAESLLEAELFGYEEGAFTGSRRGGRAGLFEIAHGGTLFLDEIGEMPLPLQTRLLRVLEEKEVTRVGGHQPVPVDVRVISATHCNLEEDMQQGRFRRDLFYRLSILRLQLPPLRERVADILPLAESFLKVSLAALSAPFSAALRQGLQASETVLLHYDWPGNIRELRNMMERLALFLSVEPTPDLTPQFMQLLLPELARESAKTPAPRLLTPQQALEKFNGDKTAAANYLGISRTTFWRRLKS.

In terms of domain architecture, Sigma-54 factor interaction spans 218 to 461; that stretch reads MLGQSPQMEQ…RNMMERLALF (244 aa). 318–327 serves as a coordination point for ATP; sequence AHGGTLFLDE. Residues 508–527 constitute a DNA-binding region (H-T-H motif); it reads KTAAANYLGISRTTFWRRLK.

Involved in the transcriptional regulation of the propionate catabolism operon. The sequence is that of Propionate catabolism operon regulatory protein (prpR) from Escherichia coli (strain K12).